The primary structure comprises 382 residues: Galactokinase (382 aa).

34-37 (EHTD) serves as a coordination point for substrate. ATP is bound at residue 124-130 (GAGLSSS). Mg(2+)-binding residues include Ser130 and Glu162. Residue Asp174 is the Proton acceptor of the active site. Position 223 (Tyr223) interacts with substrate.

This sequence belongs to the GHMP kinase family. GalK subfamily.

The protein localises to the cytoplasm. It carries out the reaction alpha-D-galactose + ATP = alpha-D-galactose 1-phosphate + ADP + H(+). Its pathway is carbohydrate metabolism; galactose metabolism. Its function is as follows. Catalyzes the transfer of the gamma-phosphate of ATP to D-galactose to form alpha-D-galactose-1-phosphate (Gal-1-P). The protein is Galactokinase of Escherichia coli O127:H6 (strain E2348/69 / EPEC).